Consider the following 423-residue polypeptide: Phaseolin (423 aa).

Residues 1-21 form the signal peptide; that stretch reads RRVPLLLLGILFLASLSASFA. N-linked (GlcNAc...) asparagine glycosylation is present at asparagine 28. Cupin type-1 domains follow at residues 35-193 and 228-383; these read FYFS…EKIN and KSLD…EDVQ. N-linked (GlcNAc...) asparagine glycans are attached at residues asparagine 243, asparagine 332, asparagine 390, and asparagine 396. Residues 397-423 form a disordered region; sequence GSYHKNAHPHEQEQQKQQKGRKGAFVY. The segment covering 414-423 has biased composition (basic residues); sequence QKGRKGAFVY.

Belongs to the 7S seed storage protein family. Homotrimer.

The protein resides in the vacuole. It is found in the aleurone grain. Functionally, major seed storage protein. The chain is Phaseolin (PHS) from Phaseolus lunatus (Lima bean).